The primary structure comprises 631 residues: BTB/POZ domain-containing protein At1g67900 (631 aa).

In terms of domain architecture, BTB spans 28–93 (SDFTIEVSGS…CYGITITISA (66 aa)). An NPH3 domain is found at 200–509 (GWWAEDIAEL…VQVLFYEQAR (310 aa)). The disordered stretch occupies residues 361 to 399 (QTSPPTSPLRGKKGMMDRRRRSRSAENIDLEFQESRRSS). Basic residues predominate over residues 370 to 382 (RGKKGMMDRRRRS). At Y450 the chain carries Phosphotyrosine. S567 carries the phosphoserine modification.

This sequence belongs to the NPH3 family.

Its pathway is protein modification; protein ubiquitination. Functionally, may act as a substrate-specific adapter of an E3 ubiquitin-protein ligase complex (CUL3-RBX1-BTB) which mediates the ubiquitination and subsequent proteasomal degradation of target proteins. This chain is BTB/POZ domain-containing protein At1g67900, found in Arabidopsis thaliana (Mouse-ear cress).